Reading from the N-terminus, the 473-residue chain is MNYHSTNVNEIWDACLRILQDIVDERAYRTWFLPIIPVSIEGDTLTLQVPSQFFCEFLEGNFVEQLRTVLGRVIGPNASLQYNALVDNSSPKYPGTVTLAGCADGGQAAEQFDVNLLHRHMPNAATHSEAQDFDTQLNSRLNFRNFYQSECNYVARSVAEAIAASPGNTPMNPFFIYGASGVGKTHLCHALGLRVREMHPRLKVLYVSSHLFEMQFTTAARMGTINDFIAFYQQVDVLIIDDIQWLIGKKKTQLAFFQVFNHLYMLGKQIVLTSDKPPVDLNGMEERLVTRMAGATCVKIERPDLKLRREILQQRTLQSGVRLDESVLNFIAENVCDNVRELEGTLVSLITNSVVVGKEIDLTFAKRIVRQAVRLEKKEVTIECIQQAVSRVFQVQIEQMKSKSRKQDIVQARQVVMFLSKKHTAQSLSAIGELMGGRNHATVLHGCRCVTNEMEMNASFRSSVERAEQLIAN.

The interval Met-1–Pro-76 is domain I, interacts with DnaA modulators. The interval Pro-76–Thr-135 is domain II. The domain III, AAA+ region stretch occupies residues Gln-136–Ser-353. ATP contacts are provided by Gly-181, Gly-183, Lys-184, and Thr-185. The tract at residues Val-354–Asn-473 is domain IV, binds dsDNA.

Belongs to the DnaA family. In terms of assembly, oligomerizes as a right-handed, spiral filament on DNA at oriC.

The protein resides in the cytoplasm. Its function is as follows. Plays an essential role in the initiation and regulation of chromosomal replication. ATP-DnaA binds to the origin of replication (oriC) to initiate formation of the DNA replication initiation complex once per cell cycle. Binds the DnaA box (a 9 base pair repeat at the origin) and separates the double-stranded (ds)DNA. Forms a right-handed helical filament on oriC DNA; dsDNA binds to the exterior of the filament while single-stranded (ss)DNA is stabiized in the filament's interior. The ATP-DnaA-oriC complex binds and stabilizes one strand of the AT-rich DNA unwinding element (DUE), permitting loading of DNA polymerase. After initiation quickly degrades to an ADP-DnaA complex that is not apt for DNA replication. Binds acidic phospholipids. The sequence is that of Chromosomal replication initiator protein DnaA from Porphyromonas gingivalis (strain ATCC 33277 / DSM 20709 / CIP 103683 / JCM 12257 / NCTC 11834 / 2561).